A 428-amino-acid chain; its full sequence is Phosphoribosylamine--glycine ligase (428 aa).

One can recognise an ATP-grasp domain in the interval 107-313 (KQVMKTYNIP…LVNVIESLLD (207 aa)). Residue 133–194 (VEAEGVPIVI…EEYLEGEELS (62 aa)) coordinates ATP. Residues glutamate 283 and asparagine 285 each coordinate Mg(2+).

Belongs to the GARS family. The cofactor is Mg(2+). It depends on Mn(2+) as a cofactor.

It carries out the reaction 5-phospho-beta-D-ribosylamine + glycine + ATP = N(1)-(5-phospho-beta-D-ribosyl)glycinamide + ADP + phosphate + H(+). It functions in the pathway purine metabolism; IMP biosynthesis via de novo pathway; N(1)-(5-phospho-D-ribosyl)glycinamide from 5-phospho-alpha-D-ribose 1-diphosphate: step 2/2. The protein is Phosphoribosylamine--glycine ligase of Halalkalibacterium halodurans (strain ATCC BAA-125 / DSM 18197 / FERM 7344 / JCM 9153 / C-125) (Bacillus halodurans).